The following is a 470-amino-acid chain: Zinc finger CCCH domain-containing protein 7 (470 aa).

The disordered stretch occupies residues 122–144 (AYSKKESEKQSGQNNTSTASRNH). Over residues 131-142 (QSGQNNTSTASR) the composition is skewed to polar residues. C3H1-type zinc fingers lie at residues 240-269 (AKKK…HDPS), 273-294 (VCTK…HKVI), 295-321 (PERM…HVHV), 322-349 (NPIA…HSYN), and 350-372 (CPVF…HPKN). Positions 370–381 (PKNQSKGRKRKR) are enriched in basic residues. The segment at 370–389 (PKNQSKGRKRKRTNEPSQKN) is disordered.

Functionally, possesses RNA-binding and ribonuclease activities in vitro. This chain is Zinc finger CCCH domain-containing protein 7, found in Arabidopsis thaliana (Mouse-ear cress).